The chain runs to 130 residues: UPF0102 protein AHA_3896 (130 aa).

This sequence belongs to the UPF0102 family.

This chain is UPF0102 protein AHA_3896, found in Aeromonas hydrophila subsp. hydrophila (strain ATCC 7966 / DSM 30187 / BCRC 13018 / CCUG 14551 / JCM 1027 / KCTC 2358 / NCIMB 9240 / NCTC 8049).